Reading from the N-terminus, the 510-residue chain is UDP-galactopyranose mutase (510 aa).

4 residues coordinate FAD: threonine 18, aspartate 38, leucine 46, and glycine 61. Residues glycine 61 and glycine 62 each coordinate UDP-alpha-D-galactose. Histidine 63 lines the FAD pocket. NADH is bound by residues histidine 68, arginine 91, and serine 93. Residues histidine 68, arginine 91, serine 93, and tyrosine 104 each coordinate NADPH. Residues tyrosine 104, glutamine 107, methionine 159, tyrosine 162, asparagine 163, tryptophan 167, and arginine 182 each contribute to the UDP-alpha-D-galactose site. Residue asparagine 203 coordinates NADPH. Residue asparagine 207 participates in UDP-alpha-D-galactose binding. Valine 242 contacts FAD. Tryptophan 315 and tyrosine 317 together coordinate NADPH. Positions 317, 327, and 419 each coordinate UDP-alpha-D-galactose. Arginine 327 lines the FAD pocket. NADH contacts are provided by tyrosine 419 and arginine 447. NADPH contacts are provided by tyrosine 419 and arginine 447. Residue arginine 447 participates in FAD binding. A UDP-alpha-D-galactose-binding site is contributed by tyrosine 453. Glycine 456, asparagine 457, and glutamine 458 together coordinate FAD. Asparagine 457 serves as a coordination point for UDP-alpha-D-galactose. Position 457 (asparagine 457) interacts with NADH. Asparagine 457 contacts NADPH. Histidine 460 lines the NADPH pocket. Position 461 (serine 461) interacts with FAD.

This sequence belongs to the UDP-galactopyranose/dTDP-fucopyranose mutase family. Homotetramer. The cofactor is FAD.

It catalyses the reaction UDP-alpha-D-galactose = UDP-alpha-D-galactofuranose. Its function is as follows. UDP-galactopyranose mutase, key flavoenzyme of galactofuranose metabolism that catalyzes the 6-to-5 ring contraction of UDP-galactopyranose to UDP-galactofuranose, the donor used by various galacto-furanosyltransferases. Controls the biosynthesis of galactomannan and galactofuranose containing glycoconjugates. The flavin functions as nucleophile, forming a flavin-sugar adduct that facilitates galactose-ring opening and contraction. The binding of UDP-galactopyranose induces profound conformational changes in the enzyme and two loops on opposite sides of the active site move toward each other by over 10 Angstroms to cover the substrate and create a closed active site. The protein is UDP-galactopyranose mutase of Aspergillus fumigatus (Neosartorya fumigata).